The primary structure comprises 258 residues: F-box/SPRY domain-containing protein 1 (258 aa).

One can recognise an F-box domain in the interval 6–54 (TEYAPDIPDNVLELIFSYLKLQDLRNCALVCKSWHRFLSDENNEVWRAQ). In terms of domain architecture, B30.2/SPRY spans 64 to 256 (FKTDLLSVVP…ISMVYLGPPL (193 aa)).

The protein belongs to the FBXO45/Fsn family. In terms of assembly, component of an E3 ubiquitin ligase complex composed of hiw and Fsn.

The protein resides in the synapse. It participates in protein modification; protein ubiquitination. Its function is as follows. Required in the presynaptic motoneuron to down-regulate the levels of wnd and restrain synaptic terminal growth at the neuromuscular junction (NMJ). The sequence is that of F-box/SPRY domain-containing protein 1 from Culex quinquefasciatus (Southern house mosquito).